The sequence spans 497 residues: Probable cytosol aminopeptidase (497 aa).

K263 and D268 together coordinate Mn(2+). Residue K275 is part of the active site. Mn(2+) contacts are provided by D286, D345, and E347. R349 is an active-site residue.

This sequence belongs to the peptidase M17 family. The cofactor is Mn(2+).

The protein localises to the cytoplasm. It catalyses the reaction Release of an N-terminal amino acid, Xaa-|-Yaa-, in which Xaa is preferably Leu, but may be other amino acids including Pro although not Arg or Lys, and Yaa may be Pro. Amino acid amides and methyl esters are also readily hydrolyzed, but rates on arylamides are exceedingly low.. The enzyme catalyses Release of an N-terminal amino acid, preferentially leucine, but not glutamic or aspartic acids.. In terms of biological role, presumably involved in the processing and regular turnover of intracellular proteins. Catalyzes the removal of unsubstituted N-terminal amino acids from various peptides. The sequence is that of Probable cytosol aminopeptidase from Agrobacterium fabrum (strain C58 / ATCC 33970) (Agrobacterium tumefaciens (strain C58)).